Consider the following 426-residue polypeptide: Serine--tRNA ligase (426 aa).

231 to 233 is a binding site for L-serine; sequence TAE. 262–264 is a binding site for ATP; that stretch reads RSE. Residue glutamate 285 coordinates L-serine. 349–352 is a binding site for ATP; it reads EISS. Serine 385 is an L-serine binding site.

The protein belongs to the class-II aminoacyl-tRNA synthetase family. Type-1 seryl-tRNA synthetase subfamily. Homodimer. The tRNA molecule binds across the dimer.

It localises to the cytoplasm. It catalyses the reaction tRNA(Ser) + L-serine + ATP = L-seryl-tRNA(Ser) + AMP + diphosphate + H(+). It carries out the reaction tRNA(Sec) + L-serine + ATP = L-seryl-tRNA(Sec) + AMP + diphosphate + H(+). The protein operates within aminoacyl-tRNA biosynthesis; selenocysteinyl-tRNA(Sec) biosynthesis; L-seryl-tRNA(Sec) from L-serine and tRNA(Sec): step 1/1. Its function is as follows. Catalyzes the attachment of serine to tRNA(Ser). Is also able to aminoacylate tRNA(Sec) with serine, to form the misacylated tRNA L-seryl-tRNA(Sec), which will be further converted into selenocysteinyl-tRNA(Sec). The chain is Serine--tRNA ligase from Saccharophagus degradans (strain 2-40 / ATCC 43961 / DSM 17024).